We begin with the raw amino-acid sequence, 907 residues long: Aldehyde oxidoreductase (907 aa).

In terms of domain architecture, 2Fe-2S ferredoxin-type spans Ile2 to Val79. Cys40, Cys45, Cys48, Cys60, Cys100, Cys103, Cys137, and Cys139 together coordinate [2Fe-2S] cluster. His653 and Glu869 together coordinate Mo-molybdopterin cytosine dinucleotide.

This sequence belongs to the xanthine dehydrogenase family. As to quaternary structure, homodimer. Mo-molybdopterin cytosine dinucleotide serves as cofactor. The cofactor is [2Fe-2S] cluster.

It catalyses the reaction an aldehyde + A + H2O = a carboxylate + AH2 + H(+). The chain is Aldehyde oxidoreductase (mop) from Megalodesulfovibrio gigas (Desulfovibrio gigas).